The sequence spans 452 residues: ADP-dependent glucose/glucosamine kinase (452 aa).

The ADPK domain maps to 1–452 (MSWDEMYRDA…AFVSEFSLSS (452 aa)). Residues aspartate 33, glutamate 87, 111 to 112 (GQ), and histidine 174 contribute to the D-glucose site. Glutamate 264 is a binding site for Mg(2+). Asparagine 290 serves as a coordination point for ADP. Glutamate 293 lines the Mg(2+) pocket. ADP is bound by residues 339–340 (HT), valine 426, and glycine 436. Residue aspartate 437 coordinates D-glucose. A Mg(2+)-binding site is contributed by aspartate 437. Aspartate 437 functions as the Proton acceptor in the catalytic mechanism.

This sequence belongs to the ADP-dependent glucokinase family. It depends on Mg(2+) as a cofactor.

It is found in the cytoplasm. The catalysed reaction is D-glucose + ADP = D-glucose 6-phosphate + AMP + H(+). The enzyme catalyses D-glucosamine + ADP = D-glucosamine 6-phosphate + AMP + H(+). It participates in carbohydrate degradation; glycolysis. Catalyzes the ADP-dependent phosphorylation of D-glucose to D-glucose 6-phosphate and glucosamine to glucosamine 6-phosphate. The chain is ADP-dependent glucose/glucosamine kinase from Pyrococcus abyssi (strain GE5 / Orsay).